Consider the following 403-residue polypeptide: Queuine tRNA-ribosyltransferase catalytic subunit 1 (403 aa).

At Ala-2 the chain carries N-acetylalanine. Catalysis depends on Asp-105, which acts as the Proton acceptor. A queuine-binding site is contributed by 105-109; that stretch reads DSGGF. Position 139 is a phosphoserine (Ser-139). Residues Asp-159, Gln-202, and Gly-229 each contribute to the queuine site. Positions 260 to 266 are RNA binding; it reads GVGYATD. Asp-279 functions as the Nucleophile in the catalytic mechanism. Residues 284–288 are RNA binding; important for wobble base 34 recognition; the sequence is TRTAR. Positions 317, 319, 322, and 348 each coordinate Zn(2+).

Belongs to the queuine tRNA-ribosyltransferase family. As to quaternary structure, heterodimer of a catalytic subunit QTRT1 and an accessory subunit QTRT2. Zn(2+) is required as a cofactor.

Its subcellular location is the cytoplasm. The protein resides in the mitochondrion outer membrane. It carries out the reaction guanosine(34) in tRNA + queuine = queuosine(34) in tRNA + guanine. Functionally, catalytic subunit of the queuine tRNA-ribosyltransferase (TGT) that catalyzes the base-exchange of a guanine (G) residue with queuine (Q) at position 34 (anticodon wobble position) in tRNAs with GU(N) anticodons (tRNA-Asp, -Asn, -His and -Tyr), resulting in the hypermodified nucleoside queuosine (7-(((4,5-cis-dihydroxy-2-cyclopenten-1-yl)amino)methyl)-7-deazaguanosine). Catalysis occurs through a double-displacement mechanism. The nucleophile active site attacks the C1' of nucleotide 34 to detach the guanine base from the RNA, forming a covalent enzyme-RNA intermediate. The proton acceptor active site deprotonates the incoming queuine, allowing a nucleophilic attack on the C1' of the ribose to form the product. The polypeptide is Queuine tRNA-ribosyltransferase catalytic subunit 1 (Rattus norvegicus (Rat)).